Consider the following 498-residue polypeptide: UDP-N-acetylmuramate--L-alanine ligase (498 aa).

122–128 provides a ligand contact to ATP; that stretch reads GTHGKTS.

Belongs to the MurCDEF family.

Its subcellular location is the cytoplasm. The catalysed reaction is UDP-N-acetyl-alpha-D-muramate + L-alanine + ATP = UDP-N-acetyl-alpha-D-muramoyl-L-alanine + ADP + phosphate + H(+). Its pathway is cell wall biogenesis; peptidoglycan biosynthesis. In terms of biological role, cell wall formation. This is UDP-N-acetylmuramate--L-alanine ligase from Corynebacterium jeikeium (strain K411).